The sequence spans 378 residues: N-acetyldiaminopimelate deacetylase (378 aa).

Aspartate 65 is a catalytic residue. The Proton acceptor role is filled by glutamate 124.

It belongs to the peptidase M20A family. N-acetyldiaminopimelate deacetylase subfamily.

It carries out the reaction N-acetyl-(2S,6S)-2,6-diaminopimelate + H2O = (2S,6S)-2,6-diaminopimelate + acetate. It participates in amino-acid biosynthesis; L-lysine biosynthesis via DAP pathway; LL-2,6-diaminopimelate from (S)-tetrahydrodipicolinate (acetylase route): step 3/3. Its function is as follows. Catalyzes the conversion of N-acetyl-diaminopimelate to diaminopimelate and acetate. The chain is N-acetyldiaminopimelate deacetylase from Anoxybacillus flavithermus (strain DSM 21510 / WK1).